A 268-amino-acid polypeptide reads, in one-letter code: Undecaprenyl-diphosphatase (268 aa).

The next 7 membrane-spanning stretches (helical) occupy residues Leu41–Phe61, Trp81–Met101, Tyr106–Phe126, Met146–Ile166, Phe191–Gly211, Val213–Ile233, and Val245–Leu265.

This sequence belongs to the UppP family.

The protein localises to the cell membrane. The enzyme catalyses di-trans,octa-cis-undecaprenyl diphosphate + H2O = di-trans,octa-cis-undecaprenyl phosphate + phosphate + H(+). Its function is as follows. Catalyzes the dephosphorylation of undecaprenyl diphosphate (UPP). This Pyrobaculum islandicum (strain DSM 4184 / JCM 9189 / GEO3) protein is Undecaprenyl-diphosphatase.